A 61-amino-acid polypeptide reads, in one-letter code: Metallothionein (61 aa).

Methionine 1 carries the post-translational modification N-acetylmethionine. The tract at residues 1–29 is beta; the sequence is MDPNCSCAAGGSCTCAGSCKCKECKCTSC. The a divalent metal cation site is built by cysteine 5, cysteine 7, cysteine 13, cysteine 15, cysteine 19, cysteine 21, cysteine 24, cysteine 26, cysteine 29, cysteine 33, cysteine 34, cysteine 36, cysteine 37, cysteine 41, cysteine 44, cysteine 48, cysteine 50, cysteine 57, cysteine 59, and cysteine 60. Positions 30 to 61 are alpha; it reads KKSCCSCCPPGCTKCAQGCVCKGASDKCNCCA.

It belongs to the metallothionein superfamily. Type 1 family. Monomer.

Functionally, metallothioneins have a high content of cysteine residues that bind various heavy metals. The sequence is that of Metallothionein from Balaena mysticetus (Bowhead whale).